A 204-amino-acid polypeptide reads, in one-letter code: uncharacterized protein (204 aa).

This is an uncharacterized protein from Acinetobacter calcoaceticus.